The primary structure comprises 255 residues: Expansin-A25 (255 aa).

Positions 1–26 (MEYAILFATSLVITVLAASGFAPAHG) are cleaved as a signal peptide. The region spanning 45–160 (GGACGYGNLY…QQVKCWRQGG (116 aa)) is the Expansin-like EG45 domain. The Expansin-like CBD domain maps to 170 to 249 (FFELVLVSNV…WWSFGMTFTS (80 aa)).

This sequence belongs to the expansin family. Expansin A subfamily. As to expression, expressed in panicles and flowers.

The protein resides in the secreted. It is found in the cell wall. Its subcellular location is the membrane. Its function is as follows. May cause loosening and extension of plant cell walls by disrupting non-covalent bonding between cellulose microfibrils and matrix glucans. No enzymatic activity has been found. May be required for rapid internodal elongation in deepwater rice during submergence. This Oryza sativa subsp. japonica (Rice) protein is Expansin-A25 (EXPA25).